A 523-amino-acid chain; its full sequence is GMP synthase [glutamine-hydrolyzing] (523 aa).

Residues 8-205 (KILILDFGSQ…VVDICGCETN (198 aa)) form the Glutamine amidotransferase type-1 domain. The active-site Nucleophile is the C85. Active-site residues include H179 and E181. The 193-residue stretch at 206 to 398 (WTAENIIEDA…LGLPAEMLNR (193 aa)) folds into the GMPS ATP-PPase domain. 233–239 (SGGVDSS) is an ATP binding site.

In terms of assembly, homodimer.

The catalysed reaction is XMP + L-glutamine + ATP + H2O = GMP + L-glutamate + AMP + diphosphate + 2 H(+). Its pathway is purine metabolism; GMP biosynthesis; GMP from XMP (L-Gln route): step 1/1. Its function is as follows. Catalyzes the synthesis of GMP from XMP. This is GMP synthase [glutamine-hydrolyzing] from Histophilus somni (strain 2336) (Haemophilus somnus).